The chain runs to 456 residues: tRNA-2-methylthio-N(6)-dimethylallyladenosine synthase (456 aa).

One can recognise an MTTase N-terminal domain in the interval 17-135; the sequence is KLYLIQSFGC…LPRMIHQVQE (119 aa). C26, C62, C96, C172, C176, and C179 together coordinate [4Fe-4S] cluster. A Radical SAM core domain is found at 158–387; that stretch reads RKDKLKAWVT…IELQNLISLE (230 aa). Residues 390-453 form the TRAM domain; the sequence is QREEGRVLEV…PNLLEGEVVP (64 aa).

Belongs to the methylthiotransferase family. MiaB subfamily. As to quaternary structure, monomer. [4Fe-4S] cluster is required as a cofactor.

It is found in the cytoplasm. The enzyme catalyses N(6)-dimethylallyladenosine(37) in tRNA + (sulfur carrier)-SH + AH2 + 2 S-adenosyl-L-methionine = 2-methylsulfanyl-N(6)-dimethylallyladenosine(37) in tRNA + (sulfur carrier)-H + 5'-deoxyadenosine + L-methionine + A + S-adenosyl-L-homocysteine + 2 H(+). In terms of biological role, catalyzes the methylthiolation of N6-(dimethylallyl)adenosine (i(6)A), leading to the formation of 2-methylthio-N6-(dimethylallyl)adenosine (ms(2)i(6)A) at position 37 in tRNAs that read codons beginning with uridine. The protein is tRNA-2-methylthio-N(6)-dimethylallyladenosine synthase of Desulforamulus reducens (strain ATCC BAA-1160 / DSM 100696 / MI-1) (Desulfotomaculum reducens).